The primary structure comprises 146 residues: Hemoglobin subunit beta (146 aa).

N-acetylvaline is present on Val1. A Globin domain is found at 2–146; it reads QLSGEEKAAV…VANALAHKYH (145 aa). Ser44 is modified (phosphoserine). Residue Lys59 is modified to N6-acetyllysine. His63 provides a ligand contact to heme b. Lys82 bears the N6-acetyllysine mark. His92 provides a ligand contact to heme b. Cys93 is modified (S-nitrosocysteine). Lys144 carries the N6-acetyllysine modification.

The protein belongs to the globin family. As to quaternary structure, heterotetramer of two alpha chains and two beta chains. Red blood cells.

Functionally, involved in oxygen transport from the lung to the various peripheral tissues. In Equus caballus (Horse), this protein is Hemoglobin subunit beta (HBB).